The primary structure comprises 267 residues: Kallikrein-14 (267 aa).

Residues 1–34 (MSLRVLGSGTWPSAPKMFLLLTALQVLAIAMTQS) form the signal peptide. A propeptide spans 35–40 (QEDENK) (activation peptide). Positions 41–265 (IIGGHTCTRS…YRSWIEETMR (225 aa)) constitute a Peptidase S1 domain. Intrachain disulfides connect Cys47–Cys180, Cys68–Cys84, Cys159–Cys226, Cys191–Cys205, and Cys216–Cys241. Residues His83 and Asp127 each act as charge relay system in the active site. The active-site Charge relay system is the Ser220.

Belongs to the peptidase S1 family. Kallikrein subfamily. Post-translationally, proteolytic cleavage of the activation peptide produces the active enzyme. Highly expressed in CNS, bone marrow and fetal liver. Also expressed in breast, thyroid, kidney, colon, pancreas, spleen, prostate, uterus, small intestine, placenta and skeletal muscle. Among 40 tissues tested, the highest expression is detected in skin followed by breast and prostate (at protein level). Expressed in stratum corneum by sweat ducts and sweat glands and detected in sweat (at protein level).

It is found in the secreted. The protein localises to the extracellular space. Its activity is regulated as follows. Inhibited by SERPINA1, SERPINC1, SERPINE1, SERPINF2, aprotinin, soybean, trypsin inhibitor and leupeptin. Inhibited by serine protease inhibitor SPINK5. Has an autoproteolytic activity which may have a regulatory effect. Activated by citrate and inhibited by zinc and to a lower extent by manganese. Its function is as follows. Serine-type endopeptidase with a dual trypsin-like and chymotrypsin-like substrate specificity. May activate/inactivate the proteinase-activated receptors F2R, F2RL1 and F2RL3 and other kallikreins including KLK1, KLK3, KLK5 and KLK11. May function in seminal clot liquefaction through direct cleavage of the semenogelin SEMG1 and SEMG2 and activation of KLK3. May function through desmoglein DSG1 cleavage in epidermal desquamation a process by which the most superficial corneocytes are shed from the skin surface. May be involved in several aspects of tumor progression including growth, invasion and angiogenesis. This chain is Kallikrein-14 (KLK14), found in Homo sapiens (Human).